Consider the following 251-residue polypeptide: Hydroxyacylglutathione hydrolase (251 aa).

The Zn(2+) site is built by His-53, His-55, Asp-57, His-58, His-110, Asp-127, and His-165.

Belongs to the metallo-beta-lactamase superfamily. Glyoxalase II family. As to quaternary structure, monomer. It depends on Zn(2+) as a cofactor.

It catalyses the reaction an S-(2-hydroxyacyl)glutathione + H2O = a 2-hydroxy carboxylate + glutathione + H(+). The protein operates within secondary metabolite metabolism; methylglyoxal degradation; (R)-lactate from methylglyoxal: step 2/2. Functionally, thiolesterase that catalyzes the hydrolysis of S-D-lactoyl-glutathione to form glutathione and D-lactic acid. This chain is Hydroxyacylglutathione hydrolase, found in Escherichia coli O6:H1 (strain CFT073 / ATCC 700928 / UPEC).